The chain runs to 285 residues: Eukaryotic translation initiation factor 3 subunit F-2 (285 aa).

The region spanning 11–145 (VYLKPLVFFQ…TRLYCAVEMG (135 aa)) is the MPN domain.

The protein belongs to the eIF-3 subunit F family. In terms of assembly, component of the eukaryotic translation initiation factor 3 (eIF-3) complex. The eIF-3 complex interacts with pix.

Its subcellular location is the cytoplasm. Functionally, component of the eukaryotic translation initiation factor 3 (eIF-3) complex, which is involved in protein synthesis of a specialized repertoire of mRNAs and, together with other initiation factors, stimulates binding of mRNA and methionyl-tRNAi to the 40S ribosome. The eIF-3 complex specifically targets and initiates translation of a subset of mRNAs involved in cell proliferation. The protein is Eukaryotic translation initiation factor 3 subunit F-2 of Drosophila melanogaster (Fruit fly).